The primary structure comprises 352 residues: Holliday junction branch migration complex subunit RuvB (352 aa).

Positions 13–201 (FSLRKKELRL…FGISQKIEFY (189 aa)) are large ATPase domain (RuvB-L). ATP-binding positions include Arg41, Gly82, Lys85, Thr86, Thr87, 148–150 (EDF), Arg191, Tyr201, and Arg238. Residue Thr86 coordinates Mg(2+). The interval 202–273 (TCDELKQIID…LIKKALNSYQ (72 aa)) is small ATPAse domain (RuvB-S). Positions 276–352 (EKGLDYVDRQ…KYIDSKNDNF (77 aa)) are head domain (RuvB-H). DNA-binding residues include Arg330 and Arg335.

The protein belongs to the RuvB family. Homohexamer. Forms an RuvA(8)-RuvB(12)-Holliday junction (HJ) complex. HJ DNA is sandwiched between 2 RuvA tetramers; dsDNA enters through RuvA and exits via RuvB. An RuvB hexamer assembles on each DNA strand where it exits the tetramer. Each RuvB hexamer is contacted by two RuvA subunits (via domain III) on 2 adjacent RuvB subunits; this complex drives branch migration. In the full resolvosome a probable DNA-RuvA(4)-RuvB(12)-RuvC(2) complex forms which resolves the HJ.

Its subcellular location is the cytoplasm. It catalyses the reaction ATP + H2O = ADP + phosphate + H(+). The RuvA-RuvB-RuvC complex processes Holliday junction (HJ) DNA during genetic recombination and DNA repair, while the RuvA-RuvB complex plays an important role in the rescue of blocked DNA replication forks via replication fork reversal (RFR). RuvA specifically binds to HJ cruciform DNA, conferring on it an open structure. The RuvB hexamer acts as an ATP-dependent pump, pulling dsDNA into and through the RuvAB complex. RuvB forms 2 homohexamers on either side of HJ DNA bound by 1 or 2 RuvA tetramers; 4 subunits per hexamer contact DNA at a time. Coordinated motions by a converter formed by DNA-disengaged RuvB subunits stimulates ATP hydrolysis and nucleotide exchange. Immobilization of the converter enables RuvB to convert the ATP-contained energy into a lever motion, pulling 2 nucleotides of DNA out of the RuvA tetramer per ATP hydrolyzed, thus driving DNA branch migration. The RuvB motors rotate together with the DNA substrate, which together with the progressing nucleotide cycle form the mechanistic basis for DNA recombination by continuous HJ branch migration. Branch migration allows RuvC to scan DNA until it finds its consensus sequence, where it cleaves and resolves cruciform DNA. The sequence is that of Holliday junction branch migration complex subunit RuvB from Prochlorococcus marinus (strain MIT 9312).